A 164-amino-acid chain; its full sequence is Endoribonuclease YbeY (164 aa).

Zn(2+)-binding residues include H125, H129, and H135.

The protein belongs to the endoribonuclease YbeY family. The cofactor is Zn(2+).

The protein resides in the cytoplasm. Single strand-specific metallo-endoribonuclease involved in late-stage 70S ribosome quality control and in maturation of the 3' terminus of the 16S rRNA. This Paramagnetospirillum magneticum (strain ATCC 700264 / AMB-1) (Magnetospirillum magneticum) protein is Endoribonuclease YbeY.